The sequence spans 415 residues: Gamma-glutamyl phosphate reductase (415 aa).

This sequence belongs to the gamma-glutamyl phosphate reductase family.

It localises to the cytoplasm. It carries out the reaction L-glutamate 5-semialdehyde + phosphate + NADP(+) = L-glutamyl 5-phosphate + NADPH + H(+). It functions in the pathway amino-acid biosynthesis; L-proline biosynthesis; L-glutamate 5-semialdehyde from L-glutamate: step 2/2. Its function is as follows. Catalyzes the NADPH-dependent reduction of L-glutamate 5-phosphate into L-glutamate 5-semialdehyde and phosphate. The product spontaneously undergoes cyclization to form 1-pyrroline-5-carboxylate. This is Gamma-glutamyl phosphate reductase from Pseudoalteromonas translucida (strain TAC 125).